The chain runs to 451 residues: 3-phosphoshikimate 1-carboxyvinyltransferase (451 aa).

3-phosphoshikimate is bound by residues K38, S39, and R43. K38 is a binding site for phosphoenolpyruvate. Residues G111 and R140 each coordinate phosphoenolpyruvate. S185, Q187, D335, and K362 together coordinate 3-phosphoshikimate. Phosphoenolpyruvate is bound at residue Q187. Residue D335 is the Proton acceptor of the active site. 2 residues coordinate phosphoenolpyruvate: R366 and R408.

This sequence belongs to the EPSP synthase family. Monomer.

The protein resides in the cytoplasm. The catalysed reaction is 3-phosphoshikimate + phosphoenolpyruvate = 5-O-(1-carboxyvinyl)-3-phosphoshikimate + phosphate. It participates in metabolic intermediate biosynthesis; chorismate biosynthesis; chorismate from D-erythrose 4-phosphate and phosphoenolpyruvate: step 6/7. Functionally, catalyzes the transfer of the enolpyruvyl moiety of phosphoenolpyruvate (PEP) to the 5-hydroxyl of shikimate-3-phosphate (S3P) to produce enolpyruvyl shikimate-3-phosphate and inorganic phosphate. In Crocosphaera subtropica (strain ATCC 51142 / BH68) (Cyanothece sp. (strain ATCC 51142)), this protein is 3-phosphoshikimate 1-carboxyvinyltransferase.